The primary structure comprises 88 residues: Small ribosomal subunit protein bS20 (88 aa).

Belongs to the bacterial ribosomal protein bS20 family.

Binds directly to 16S ribosomal RNA. The protein is Small ribosomal subunit protein bS20 of Nitrobacter winogradskyi (strain ATCC 25391 / DSM 10237 / CIP 104748 / NCIMB 11846 / Nb-255).